The following is a 476-amino-acid chain: Argininosuccinate lyase (476 aa).

The segment covering 1–17 (MTDTGSSDTNTDTTGTS) has biased composition (low complexity). Positions 1–22 (MTDTGSSDTNTDTTGTSKANTM) are disordered.

Belongs to the lyase 1 family. Argininosuccinate lyase subfamily.

The protein localises to the cytoplasm. It catalyses the reaction 2-(N(omega)-L-arginino)succinate = fumarate + L-arginine. It functions in the pathway amino-acid biosynthesis; L-arginine biosynthesis; L-arginine from L-ornithine and carbamoyl phosphate: step 3/3. The protein is Argininosuccinate lyase of Jannaschia sp. (strain CCS1).